Consider the following 209-residue polypeptide: MLTVALPKGRIAQETLEIFETLFGDGFAFDDRKLILETPKFRFLLVRNQDVATYVFHQAADIGVVGLDTLEEQGLDVIRLLDLKRGICKVAIGMKKGEKFDLNKPEIKVASKMVNITKRYFEERAVSVDIIKLYGSIELAPLIGLADMIVDVVETGSTMKQNGLEVVEDIMTSSTYLIANKNSYIAKKDEVLDIYEKIKSVIDAEQKIK.

This sequence belongs to the ATP phosphoribosyltransferase family. Short subfamily. As to quaternary structure, heteromultimer composed of HisG and HisZ subunits.

The protein resides in the cytoplasm. The enzyme catalyses 1-(5-phospho-beta-D-ribosyl)-ATP + diphosphate = 5-phospho-alpha-D-ribose 1-diphosphate + ATP. The protein operates within amino-acid biosynthesis; L-histidine biosynthesis; L-histidine from 5-phospho-alpha-D-ribose 1-diphosphate: step 1/9. Functionally, catalyzes the condensation of ATP and 5-phosphoribose 1-diphosphate to form N'-(5'-phosphoribosyl)-ATP (PR-ATP). Has a crucial role in the pathway because the rate of histidine biosynthesis seems to be controlled primarily by regulation of HisG enzymatic activity. The polypeptide is ATP phosphoribosyltransferase (Sulfurimonas denitrificans (strain ATCC 33889 / DSM 1251) (Thiomicrospira denitrificans (strain ATCC 33889 / DSM 1251))).